Consider the following 235-residue polypeptide: Uridylate kinase (235 aa).

ATP is bound at residue 9-12; the sequence is KISG. UMP is bound at residue glycine 50. Glycine 51 and arginine 55 together coordinate ATP. Residues aspartate 70 and 131–138 each bind UMP; that span reads TGFPYFTT. 3 residues coordinate ATP: asparagine 159, tyrosine 165, and aspartate 168.

This sequence belongs to the UMP kinase family. As to quaternary structure, homohexamer; trimer of dimers.

The protein localises to the cytoplasm. It carries out the reaction UMP + ATP = UDP + ADP. The protein operates within pyrimidine metabolism; CTP biosynthesis via de novo pathway; UDP from UMP (UMPK route): step 1/1. Unlike other bacteria, is not activated by GTP. UTP is a competitive inhibitor against UMP and a non-competitive inhibitor toward ATP. Its function is as follows. Catalyzes the reversible phosphorylation of UMP to UDP, with ATP as the most efficient phosphate donor. Is also able to phosphorylate dUMP. The polypeptide is Uridylate kinase (pyrH) (Ureaplasma parvum serovar 3 (strain ATCC 700970)).